The sequence spans 202 residues: MTKTYGVDVAVYQPIDLAAYHKAGASFAIVKLTEGVDYVNRRGPSRWTAPGLTTSTLMPTISRSFGSSVSRAKKEAAYFLKEAKKQDISKKRMLWLDWEAGSGNVVTGSKSSNTAAILDFMDAIKAAGWRPGLYSGASLMRTAIDTKQVVKKYGTCLWVASYPTMAAVSTADFGYFRQWTGSPSGSLPVTAWPGRRRERCSG.

Residues Asp-8 and Glu-99 contribute to the active site.

Belongs to the glycosyl hydrolase 25 family.

The enzyme catalyses Hydrolysis of (1-&gt;4)-beta-linkages between N-acetylmuramic acid and N-acetyl-D-glucosamine residues in a peptidoglycan and between N-acetyl-D-glucosamine residues in chitodextrins.. Its function is as follows. Helps to release the mature phage particles from the cell wall by breaking down the peptidoglycan. The protein is Lysozyme (lysA) of Lactobacillus delbrueckii (Lactococcus delbrueckii bacteriophage mv1).